The following is a 332-amino-acid chain: MSISQNKKSYPRLLADIGGTNARFALEVEANIIKNIEIFPCNDYNTVVDAVKVYLNKFGNPTIKYGAFAIANPVVGDWVQMTNHHWAFSIETTRQALNLEVLILINDFTAQAYAISRMSSSELIQIGGNFCTINAPKAVLGPGTGLGVSGLIPCGNGDYIALSGEGGHTSFSPFDDTEVMIWQYAKKKYGHVSTERFLSGSGLVLIYEALADREGIKSAKISPELISEQALSGKSPLCRLTLDIFCAMLGTISADLALTLGARGGVYLCGGIIPRFIDYFKTSPFRVRFEDKGRFDAYLAAIPVYVVLAKYPGIFGVAVALENHLKDYFSKK.

Residue 15-20 participates in ATP binding; that stretch reads ADIGGT.

This sequence belongs to the bacterial glucokinase family.

It localises to the cytoplasm. The catalysed reaction is D-glucose + ATP = D-glucose 6-phosphate + ADP + H(+). This chain is Glucokinase, found in Campylobacter jejuni subsp. doylei (strain ATCC BAA-1458 / RM4099 / 269.97).